The chain runs to 252 residues: Cell division protein ZapD (252 aa).

Belongs to the ZapD family. In terms of assembly, interacts with FtsZ.

It localises to the cytoplasm. Functionally, cell division factor that enhances FtsZ-ring assembly. Directly interacts with FtsZ and promotes bundling of FtsZ protofilaments, with a reduction in FtsZ GTPase activity. This is Cell division protein ZapD from Chromobacterium violaceum (strain ATCC 12472 / DSM 30191 / JCM 1249 / CCUG 213 / NBRC 12614 / NCIMB 9131 / NCTC 9757 / MK).